A 218-amino-acid polypeptide reads, in one-letter code: Large ribosomal subunit protein uL3 (218 aa).

A disordered region spans residues 133 to 158 (RGQGASHGAQAVHRRPGSIGGCATPG).

This sequence belongs to the universal ribosomal protein uL3 family. Part of the 50S ribosomal subunit. Forms a cluster with proteins L14 and L19.

In terms of biological role, one of the primary rRNA binding proteins, it binds directly near the 3'-end of the 23S rRNA, where it nucleates assembly of the 50S subunit. The sequence is that of Large ribosomal subunit protein uL3 from Mycolicibacterium vanbaalenii (strain DSM 7251 / JCM 13017 / BCRC 16820 / KCTC 9966 / NRRL B-24157 / PYR-1) (Mycobacterium vanbaalenii).